We begin with the raw amino-acid sequence, 320 residues long: Mycothiol acetyltransferase (320 aa).

N-acetyltransferase domains lie at 16–141 and 152–320; these read RQVR…RSLR and LQIR…AALA. A 1D-myo-inositol 2-(L-cysteinylamino)-2-deoxy-alpha-D-glucopyranoside-binding site is contributed by Glu-36. Residues 80–82 and 88–93 contribute to the acetyl-CoA site; these read LVV and RRGIAT. The 1D-myo-inositol 2-(L-cysteinylamino)-2-deoxy-alpha-D-glucopyranoside site is built by Glu-179, Lys-229, and Glu-239. Acetyl-CoA is bound by residues 243–245 and 250–256; these read LGV and QGRGLGR. Tyr-284 contributes to the 1D-myo-inositol 2-(L-cysteinylamino)-2-deoxy-alpha-D-glucopyranoside binding site. 289–294 contributes to the acetyl-CoA binding site; the sequence is NIAAVR.

This sequence belongs to the acetyltransferase family. MshD subfamily. In terms of assembly, monomer.

The enzyme catalyses 1D-myo-inositol 2-(L-cysteinylamino)-2-deoxy-alpha-D-glucopyranoside + acetyl-CoA = mycothiol + CoA + H(+). Functionally, catalyzes the transfer of acetyl from acetyl-CoA to desacetylmycothiol (Cys-GlcN-Ins) to form mycothiol. The chain is Mycothiol acetyltransferase from Mycobacterium marinum (strain ATCC BAA-535 / M).